The following is a 141-amino-acid chain: Lysozyme P (141 aa).

Positions 1 to 18 (MKAFLVICALTLTAVATQ) are cleaved as a signal peptide. A C-type lysozyme domain is found at 20-141 (RTMDRCSLAR…GSLPSINSCF (122 aa)). 4 cysteine pairs are disulfide-bonded: C25–C140, C46–C130, C81–C97, and C93–C111. Active-site residues include E51 and D69.

This sequence belongs to the glycosyl hydrolase 22 family. As to expression, salivary gland.

The catalysed reaction is Hydrolysis of (1-&gt;4)-beta-linkages between N-acetylmuramic acid and N-acetyl-D-glucosamine residues in a peptidoglycan and between N-acetyl-D-glucosamine residues in chitodextrins.. Functionally, unlikely to play an active role in the humoral immune defense. May have a function in the digestion of bacteria in the food. The polypeptide is Lysozyme P (LysP) (Drosophila melanogaster (Fruit fly)).